A 931-amino-acid chain; its full sequence is Protein translocase subunit SecA (931 aa).

Residues Gln-87, 105–109 (GEGKT), and Asp-515 each bind ATP. Residues Cys-915, Cys-917, Cys-926, and His-927 each contribute to the Zn(2+) site.

Belongs to the SecA family. As to quaternary structure, monomer and homodimer. Part of the essential Sec protein translocation apparatus which comprises SecA, SecYEG and auxiliary proteins SecDF-YajC and YidC. Zn(2+) is required as a cofactor.

The protein localises to the cell inner membrane. It is found in the cytoplasm. It carries out the reaction ATP + H2O + cellular proteinSide 1 = ADP + phosphate + cellular proteinSide 2.. Part of the Sec protein translocase complex. Interacts with the SecYEG preprotein conducting channel. Has a central role in coupling the hydrolysis of ATP to the transfer of proteins into and across the cell membrane, serving both as a receptor for the preprotein-SecB complex and as an ATP-driven molecular motor driving the stepwise translocation of polypeptide chains across the membrane. The protein is Protein translocase subunit SecA of Burkholderia pseudomallei (strain 1106a).